Consider the following 122-residue polypeptide: Large ribosomal subunit protein uL14 (122 aa).

Belongs to the universal ribosomal protein uL14 family. In terms of assembly, part of the 50S ribosomal subunit. Forms a cluster with proteins L3 and L19. In the 70S ribosome, L14 and L19 interact and together make contacts with the 16S rRNA in bridges B5 and B8.

Functionally, binds to 23S rRNA. Forms part of two intersubunit bridges in the 70S ribosome. This chain is Large ribosomal subunit protein uL14, found in Paraburkholderia phymatum (strain DSM 17167 / CIP 108236 / LMG 21445 / STM815) (Burkholderia phymatum).